Reading from the N-terminus, the 138-residue chain is Protein FAM136A (138 aa).

Belongs to the FAM136 family.

In Xenopus tropicalis (Western clawed frog), this protein is Protein FAM136A (fam136a).